Consider the following 396-residue polypeptide: Ornithine aminotransferase (396 aa).

Lys-255 bears the N6-(pyridoxal phosphate)lysine mark.

This sequence belongs to the class-III pyridoxal-phosphate-dependent aminotransferase family. OAT subfamily. Pyridoxal 5'-phosphate serves as cofactor.

It localises to the cytoplasm. The catalysed reaction is a 2-oxocarboxylate + L-ornithine = L-glutamate 5-semialdehyde + an L-alpha-amino acid. The protein operates within amino-acid biosynthesis; L-proline biosynthesis; L-glutamate 5-semialdehyde from L-ornithine: step 1/1. In terms of biological role, catalyzes the interconversion of ornithine to glutamate semialdehyde. The polypeptide is Ornithine aminotransferase (Bacillus anthracis (strain A0248)).